Here is a 498-residue protein sequence, read N- to C-terminus: ATP synthase subunit beta, chloroplastic (498 aa).

T6 is subject to Phosphothreonine. At S13 the chain carries Phosphoserine. 172 to 179 (GGAGVGKT) is an ATP binding site.

It belongs to the ATPase alpha/beta chains family. As to quaternary structure, F-type ATPases have 2 components, CF(1) - the catalytic core - and CF(0) - the membrane proton channel. CF(1) has five subunits: alpha(3), beta(3), gamma(1), delta(1), epsilon(1). CF(0) has four main subunits: a(1), b(1), b'(1) and c(9-12).

The protein localises to the plastid. Its subcellular location is the chloroplast thylakoid membrane. The enzyme catalyses ATP + H2O + 4 H(+)(in) = ADP + phosphate + 5 H(+)(out). Functionally, produces ATP from ADP in the presence of a proton gradient across the membrane. The catalytic sites are hosted primarily by the beta subunits. This chain is ATP synthase subunit beta, chloroplastic, found in Draba nemorosa (Woodland whitlowgrass).